The sequence spans 70 residues: Fumarase D (70 aa).

It belongs to the FumD family.

The catalysed reaction is (S)-malate = fumarate + H2O. Functionally, in vitro catalyzes the addition of water to fumarate, forming malate. Cannot catalyze the reverse reaction. Cannot use the cis-isomer maleate as substrate. The protein is Fumarase D of Salmonella typhi.